Consider the following 342-residue polypeptide: Alpha-(1,3)-fucosyltransferase 7 (342 aa).

The Cytoplasmic portion of the chain corresponds to 1-14; it reads MNNAGHGPTRRLRG. A helical; Signal-anchor for type II membrane protein membrane pass occupies residues 15-36; the sequence is LGVLAGVALLAALWLLWLLGSA. The Lumenal portion of the chain corresponds to 37–342; it reads PRGTPAPQPT…YEDLEGWFQA (306 aa). Cysteine 68 and cysteine 76 are joined by a disulfide. Asparagine 81 carries N-linked (GlcNAc...) asparagine glycosylation. Cysteines 211 and 214 form a disulfide. Asparagine 291 is a glycosylation site (N-linked (GlcNAc...) asparagine). Cysteines 318 and 321 form a disulfide.

This sequence belongs to the glycosyltransferase 10 family. N-glycosylated. Leukocytic/myeloid lineage cells.

It localises to the golgi apparatus. It is found in the golgi stack membrane. It carries out the reaction an N-acetyl-alpha-neuraminyl-(2-&gt;3)-beta-D-galactosyl-(1-&gt;4)-N-acetyl-beta-D-glucosaminyl derivative + GDP-beta-L-fucose = an alpha-Neu5Ac-(2-&gt;3)-beta-D-Gal-(1-&gt;4)-[alpha-L-Fuc-(1-&gt;3)]-beta-D-GlcNAc derivative + GDP + H(+). The catalysed reaction is a neolactoside IV(3)-alpha-NeuAc-nLc4Cer + GDP-beta-L-fucose = a neolactoside IV(3)-alpha-NeuNAc,III(3)-alpha-Fuc-nLc4Cer + GDP + H(+). The enzyme catalyses a neolactoside VI(3)-alpha-NeuNAc-nLc6Cer + GDP-beta-L-fucose = a neolactoside VI(3)-alpha-NeuAc,V(3)-alphaFuc-nLc6Cer + GDP + H(+). It catalyses the reaction an alpha-Neu5Ac-(2-&gt;3)-beta-D-Gal-(1-&gt;4)-beta-D-GlcNAc-(1-&gt;3)-beta-D-Gal-(1-&gt;4)-[alpha-L-Fuc-(1-&gt;3)]-beta-D-GlcNAc derivative + GDP-beta-L-fucose = an alpha-Neu5Ac-(2-&gt;3)-beta-D-Gal-(1-&gt;4)-[alpha-L-Fuc-(1-&gt;3)]-beta-D-GlcNAc-(1-&gt;3)-beta-D-Gal-(1-&gt;4)-[alpha-L-Fuc-(1-&gt;3)]-beta-D-GlcNAc derivative + GDP + H(+). It carries out the reaction an alpha-Neu5Ac-(2-&gt;3)-beta-D-Gal-(1-&gt;4)-beta-D-GlcNAc6S derivative + GDP-beta-L-fucose = an alpha-Neu5Ac-(2-&gt;3)-beta-D-Gal-(1-&gt;4)-[alpha-L-Fuc-(1-&gt;3)]-beta-D-GlcNAc6S derivative + GDP + H(+). The catalysed reaction is alpha-Neu5Ac-(2-&gt;3)-beta-D-Gal-(1-&gt;4)-beta-D-GlcNAc-(1-&gt;3)-beta-D-Gal-(1-&gt;4)-D-Glc + GDP-beta-L-fucose = alpha-Neu5Ac-(2-&gt;3)-beta-D-Gal-(1-&gt;4)-[alpha-L-Fuc-(1-&gt;3)]-beta-D-GlcNAc-(1-&gt;3)-beta-D-Gal-(1-&gt;4)-D-Glc + GDP + H(+). The enzyme catalyses alpha-Neu5Ac-(2-&gt;3)-beta-D-Gal-(1-&gt;4)-beta-D-GlcNAc-(1-&gt;3)-beta-D-Gal-(1-&gt;4)-[alpha-L-Fuc-(1-&gt;3)]-beta-D-GlcNAc-(1-&gt;3)-beta-D-Gal-(1-&gt;4)-beta-D-GlcNAc + GDP-beta-L-fucose = alpha-Neu5Ac-(2-&gt;3)-beta-D-Gal-(1-&gt;4)-[alpha-L-Fuc-(1-&gt;3)]-beta-D-GlcNAc-(1-&gt;3)-beta-D-Gal-(1-&gt;4)-[alpha-L-Fuc-(1-&gt;3)]-beta-D-GlcNAc-(1-&gt;3)-beta-D-Gal-(1-&gt;4)-beta-D-GlcNAc + GDP + H(+). It catalyses the reaction alpha-Neu5Ac-(2-&gt;3)-beta-D-Gal-(1-&gt;4)-beta-D-GlcNAc-(1-&gt;3)-beta-D-Gal-(1-&gt;4)-beta-D-GlcNAc-(1-&gt;3)-beta-D-Gal-(1-&gt;4)-beta-D-GlcNAc + GDP-beta-L-fucose = alpha-Neu5Ac-(2-&gt;3)-beta-D-Gal-(1-&gt;4)-[alpha-L-Fuc-(1-&gt;3)]-beta-D-GlcNAc-(1-&gt;3)-beta-D-Gal-(1-&gt;4)-beta-D-GlcNAc-(1-&gt;3)-beta-D-Gal-(1-&gt;4)-beta-D-GlcNAc + GDP + H(+). It functions in the pathway protein modification; protein glycosylation. With respect to regulation, inhibited by NaCl. Inhibited by GDP in a concentration dependent manner, with an IC(50) value of 93 uM. Also inhibited by GMP and GTP. Inhibited by N-ethylmaleimide. Activated by poly(ethylene glycol) by enhancing the thermal stability of FUT7. Activated by Mn2+, Ca2+, and Mg2+. Both panosialin A and B inhibit activity with IC(50) values of 4.8 and 5.3 ug/ml, respectively. Inhibited by gallic acid (GA) and (-)-epigallocatechin gallate (EGCG) in a time-dependent and irreversible manner with IC(50) values of 60 and 700 nM, respectively. In terms of biological role, catalyzes the transfer of L-fucose, from a guanosine diphosphate-beta-L-fucose, to the N-acetyl glucosamine (GlcNAc) of a distal alpha2,3 sialylated lactosamine unit of a glycoprotein or a glycolipid-linked sialopolylactosamines chain through an alpha-1,3 glycosidic linkage and participates in the final fucosylation step in the biosynthesis of the sialyl Lewis X (sLe(x)), a carbohydrate involved in cell and matrix adhesion during leukocyte trafficking and fertilization. In vitro, also synthesizes sialyl-dimeric-Lex structures, from VIM-2 structures and both di-fucosylated and trifucosylated structures from mono-fucosylated precursors. However does not catalyze alpha 1-3 fucosylation when an internal alpha 1-3 fucosylation is present in polylactosamine chain and the fucosylation rate of the internal GlcNAc residues is reduced once fucose has been added to the distal GlcNAc. Also catalyzes the transfer of a fucose from GDP-beta-fucose to the 6-sulfated a(2,3)sialylated substrate to produce 6-sulfo sLex mediating significant L-selectin-dependent cell adhesion. Through sialyl-Lewis(x) biosynthesis, can control SELE- and SELP-mediated cell adhesion with leukocytes and allows leukocytes tethering and rolling along the endothelial tissue thereby enabling the leukocytes to accumulate at a site of inflammation. May enhance embryo implantation through sialyl Lewis X (sLeX)-mediated adhesion of embryo cells to endometrium. May affect insulin signaling by up-regulating the phosphorylation and expression of some signaling molecules involved in the insulin-signaling pathway through SLe(x) which is present on the glycans of the INSRR alpha subunit. The protein is Alpha-(1,3)-fucosyltransferase 7 of Homo sapiens (Human).